A 531-amino-acid polypeptide reads, in one-letter code: Lysine--tRNA ligase, mitochondrial (531 aa).

Residues 1-18 (MISRGLLSKGILSIIKRK) constitute a mitochondrion transit peptide.

The protein belongs to the class-II aminoacyl-tRNA synthetase family.

It localises to the mitochondrion. The enzyme catalyses tRNA(Lys) + L-lysine + ATP = L-lysyl-tRNA(Lys) + AMP + diphosphate. This chain is Lysine--tRNA ligase, mitochondrial (msk1), found in Schizosaccharomyces pombe (strain 972 / ATCC 24843) (Fission yeast).